An 800-amino-acid chain; its full sequence is MSSHIVTPGPYRATKLWNEVTKLFRAGMPLKKHRQHFRVYTNCFTASTAVDWLHELLKNNSNFGPDVTRQQTVQLLKKFLKNHVIEDVKGRWGMEDLEDNSQLYRFPSTSPLKPIPNRPTVMRRKSLSMMDRESFFKFRGSKKFDKETLENVDPETQESPVGSSSGETERSRELTEDDIHVIWKNVTLTHLQKLVGSASLEGVLDPAKVNPQFIVYNMTKVNKHGVVSLEDKTEDLPHWALSAMKCLANWPKYDSDQPTYLGFERDVFKTVSDYFYSLPQPLLTYQYYELFVNILVMCGYITTPKSQPGKRKNQEEPNCPQPAKNPYVNPANLFRSTEYLLLSLIRKEAIDEADSPMKEVFSSKTETKLDTRRVFRGRRVSDGDRLDGSYLDVSQAHKTDVPYGRLRPRSCSLEGNINNCAKSRLFRSSESLESCSSDKSNPETDSPLEPNLQSSLVSINTSGSSVSSQLSADLRRNNSRPARARPRSIGNLFDIEENREMSASSFSVHAPVAEITMRPDSTSSVGFRGLGLSSLHGSCVDVRTGPSFSRRCQSSLDLSKPAPARPPSALLTHQPEQSLLQPSLEQVAVEALQLCTLLLPPASRRKLQLLLRMISRMSQNVDMPRLHDVIGTRTLLVQTFSRCVLSCEEVDDLDELLATRLLSFLMDHHQEVLQVPVYLRNAVEDHINYLKSLSSCPGSAGPIPSYSFCRQISCQEFEQQKLSVSQSALADLLENIIKDKSMSVKEKKKKIKLFQKEYPDIYSRRFPTTESETQLFADKPKIKPPMLLSIKKAKTFSIRN.

The region spanning 24-108 is the DEP domain; the sequence is FRAGMPLKKH…DNSQLYRFPS (85 aa). Disordered stretches follow at residues 147 to 173, 306 to 326, and 459 to 485; these read ETLE…RSRE, SQPG…AKNP, and INTS…ARAR. The Rho-GAP domain maps to 281–321; the sequence is PLLTYQYYELFVNILVMCGYITTPKSQPGKRKNQEEPNCPQ. Over residues 459–468 the composition is skewed to low complexity; the sequence is INTSGSSVSS.

This Danio rerio (Zebrafish) protein is DEP domain-containing protein 1A (depdc1a).